Here is a 608-residue protein sequence, read N- to C-terminus: Phosphomethylpyrimidine synthase (608 aa).

Substrate-binding positions include asparagine 216, methionine 245, tyrosine 274, histidine 310, 330 to 332, 371 to 374, and glutamate 410; these read SRG and DGLR. Histidine 414 contributes to the Zn(2+) binding site. Tyrosine 437 provides a ligand contact to substrate. A Zn(2+)-binding site is contributed by histidine 478. The [4Fe-4S] cluster site is built by cysteine 558, cysteine 561, and cysteine 566.

The protein belongs to the ThiC family. Homodimer. The cofactor is [4Fe-4S] cluster.

It carries out the reaction 5-amino-1-(5-phospho-beta-D-ribosyl)imidazole + S-adenosyl-L-methionine = 4-amino-2-methyl-5-(phosphooxymethyl)pyrimidine + CO + 5'-deoxyadenosine + formate + L-methionine + 3 H(+). The protein operates within cofactor biosynthesis; thiamine diphosphate biosynthesis. Its function is as follows. Catalyzes the synthesis of the hydroxymethylpyrimidine phosphate (HMP-P) moiety of thiamine from aminoimidazole ribotide (AIR) in a radical S-adenosyl-L-methionine (SAM)-dependent reaction. In Ruegeria sp. (strain TM1040) (Silicibacter sp.), this protein is Phosphomethylpyrimidine synthase.